We begin with the raw amino-acid sequence, 359 residues long: Phospho-N-acetylmuramoyl-pentapeptide-transferase (359 aa).

At 1 to 25 the chain is on the periplasmic side; that stretch reads MLYQLALLLKDYWFAFNVLKYITFR. Residues 26–48 traverse the membrane as a helical segment; sequence SFTAVLIAFFLTLVLSPSFINRL. At 49 to 74 the chain is on the cytoplasmic side; it reads RKIQRLFGGYVREYTPESHEVKKYTP. 2 residues coordinate muraymycin D2: K70 and T75. Residues 75–92 traverse the membrane as a helical segment; sequence TMGGIVILIVVTLSTLLL. Over 93–98 the chain is Periplasmic; the sequence is MRWDIK. The helical transmembrane segment at 99-120 threads the bilayer; sequence YTWVVLLSFLSFGTIGFWDDYV. At 121 to 130 the chain is on the cytoplasmic side; that stretch reads KLKNKKGISI. Residues 131 to 152 traverse the membrane as a helical segment; sequence KTKFLLQVLSASLISVLIYYWA. Topologically, residues 153–172 are periplasmic; sequence DIDTILYFPFFKELYVDLGV. The helical transmembrane segment at 173–194 threads the bilayer; it reads LYLPFAVFVIVGSANAVNLTDG. Positions 190, 193, and 196 each coordinate muraymycin D2. Residues 195–197 are Cytoplasmic-facing; the sequence is LDG. A helical transmembrane segment spans residues 198 to 218; that stretch reads LAIGPAMTTATALGVVAYAVG. Residues 219–233 are Periplasmic-facing; the sequence is HSKIAQYLNIPYVPY. Residues 234 to 255 traverse the membrane as a helical segment; that stretch reads AGELTVFCFALVGAGLGFLWFN. The Cytoplasmic portion of the chain corresponds to 256–264; that stretch reads SFPAQMFMG. G264 and S268 together coordinate muraymycin D2. A helical membrane pass occupies residues 265–280; that stretch reads DVGSLSIGASLATVAL. The Periplasmic segment spans residues 281–284; the sequence is LTKS. Residues 285-310 traverse the membrane as a helical segment; that stretch reads EFIFAVAAGVFVFETISVILQIIYFR. Muraymycin D2 is bound by residues Q305 and A321. Residues 311 to 332 lie on the Cytoplasmic side of the membrane; the sequence is WTGGKRLFKRAPFHHHLELNGL. Residues 333-355 traverse the membrane as a helical segment; that stretch reads PEPKIVVRMWIISILLAIIAISM. Residues 356–359 are Periplasmic-facing; it reads LKLR.

Belongs to the glycosyltransferase 4 family. MraY subfamily. In terms of assembly, homodimer. It depends on Mg(2+) as a cofactor. Mn(2+) serves as cofactor.

It is found in the cell inner membrane. The enzyme catalyses UDP-N-acetyl-alpha-D-muramoyl-L-alanyl-gamma-D-glutamyl-meso-2,6-diaminopimeloyl-D-alanyl-D-alanine + di-trans,octa-cis-undecaprenyl phosphate = di-trans,octa-cis-undecaprenyl diphospho-N-acetyl-alpha-D-muramoyl-L-alanyl-D-glutamyl-meso-2,6-diaminopimeloyl-D-alanyl-D-alanine + UMP. Its pathway is cell wall biogenesis; peptidoglycan biosynthesis. Inhibited by natural nucleoside antibiotics including tunicamycin, capuramycin and muraymycin. Usually the cofactor magnesium is not required for antibiotic binding. Functionally, catalyzes the initial step of the lipid cycle reactions in the biosynthesis of the cell wall peptidoglycan: transfers peptidoglycan precursor phospho-MurNAc-pentapeptide from UDP-MurNAc-pentapeptide onto the lipid carrier undecaprenyl phosphate, yielding undecaprenyl-pyrophosphoryl-MurNAc-pentapeptide, known as lipid I. The sequence is that of Phospho-N-acetylmuramoyl-pentapeptide-transferase from Aquifex aeolicus (strain VF5).